Here is a 244-residue protein sequence, read N- to C-terminus: Biosynthetic peptidoglycan transglycosylase (244 aa).

A helical membrane pass occupies residues Phe26–Ile46.

The protein belongs to the glycosyltransferase 51 family.

It is found in the cell inner membrane. It carries out the reaction [GlcNAc-(1-&gt;4)-Mur2Ac(oyl-L-Ala-gamma-D-Glu-L-Lys-D-Ala-D-Ala)](n)-di-trans,octa-cis-undecaprenyl diphosphate + beta-D-GlcNAc-(1-&gt;4)-Mur2Ac(oyl-L-Ala-gamma-D-Glu-L-Lys-D-Ala-D-Ala)-di-trans,octa-cis-undecaprenyl diphosphate = [GlcNAc-(1-&gt;4)-Mur2Ac(oyl-L-Ala-gamma-D-Glu-L-Lys-D-Ala-D-Ala)](n+1)-di-trans,octa-cis-undecaprenyl diphosphate + di-trans,octa-cis-undecaprenyl diphosphate + H(+). It functions in the pathway cell wall biogenesis; peptidoglycan biosynthesis. In terms of biological role, peptidoglycan polymerase that catalyzes glycan chain elongation from lipid-linked precursors. This chain is Biosynthetic peptidoglycan transglycosylase, found in Mannheimia succiniciproducens (strain KCTC 0769BP / MBEL55E).